A 618-amino-acid polypeptide reads, in one-letter code: Tyrosine-protein kinase ZAP-70 (618 aa).

Residues 10–102 form the SH2 1 domain; it reads FFYGSISRAE…GLPCNLRKPC (93 aa). An interdomain A region spans residues 103–162; the sequence is NRPPGLEPQPGVFDCLRDAMVRDYVRQTWKLEGDALEQAIISQAPQVEKLIATTAHERMP. Residues 163 to 254 enclose the SH2 2 domain; sequence WYHSSLTREE…GLIYRLKEVC (92 aa). Phosphotyrosine is present on tyrosine 248. Residues 255-336 form an interdomain B region; that stretch reads PNSSASAAVA…KKLFLKRENL (82 aa). The interval 270 to 320 is disordered; that stretch reads AHPSTFTQPQRRVDTLNSDGYTPEPARLASSTDKPRPMPMDTSVYESPYSD. Residues 273–289 are compositionally biased toward polar residues; it reads STFTQPQRRVDTLNSDG. Serine 287 bears the Phosphoserine mark. Tyrosine 290 is subject to Phosphotyrosine. At tyrosine 314 the chain carries Phosphotyrosine; by LCK. Residue tyrosine 318 is modified to Phosphotyrosine. Residues 337–597 form the Protein kinase domain; sequence LVADIELGCG…VEQRMRNYYY (261 aa). ATP is bound by residues 343–351 and lysine 368; that span reads LGCGNFGSV. Aspartate 460 (proton acceptor) is an active-site residue. Phosphotyrosine is present on residues tyrosine 491 and tyrosine 492. Residue lysine 543 forms a Glycyl lysine isopeptide (Lys-Gly) (interchain with G-Cter in ubiquitin) linkage.

It belongs to the protein kinase superfamily. Tyr protein kinase family. SYK/ZAP-70 subfamily. In terms of assembly, interacts with CD247/CD3Z; this interaction docks ZAP70 at the stimulated TCR. Interacts with NFAM1. Interacts with adapter protein SLA; this interaction negatively regulates T-cell receptor signaling. Interacts with VAV1. Interacts with CBL; this interaction promotes ubiquitination, internalization and subsequent degradation of CD247/CD3Z. Identified in a complex with CBL and UBE2L3. Interacts with SHB. Interacts with adapter protein SLA2; this interaction negatively regulates T-cell receptor signaling. Interacts with CBLB. Interacts (via SH2 domains) with RHOH; this interaction regulates ZAP70 subcellular localization. Interacts with DEF6. Interacts (ubiquitinated form) with OTUD7B and UBASH3B. Phosphorylated on tyrosine residues upon T-cell antigen receptor (TCR) stimulation. Phosphorylation of Tyr-314 and Tyr-314 are essential for ZAP70 positive function on T-lymphocyte activation whereas Tyr-290 has a negative regulatory role. Within the C-terminal kinase domain, Tyr-491 and Tyr-492 are phosphorylated after TCR induction, Tyr-491 playing a negative regulatory role and Tyr-492 a positive. Tyr-492 is dephosphorylated by PTN22. Post-translationally, ubiquitinated in response to T cell activation. Deubiquitinated by OTUD7B. Isoform 1 and isoform 2 are expressed in thymus, spleen and lymph nodes.

The protein resides in the cytoplasm. The protein localises to the cell membrane. The enzyme catalyses L-tyrosyl-[protein] + ATP = O-phospho-L-tyrosyl-[protein] + ADP + H(+). Activated by phosphorylation at Tyr-492 in the activation loop. In terms of biological role, tyrosine kinase that plays an essential role in regulation of the adaptive immune response. Regulates motility, adhesion and cytokine expression of mature T-cells, as well as thymocyte development. Also contributes to the development and activation of primary B-lymphocytes. When antigen presenting cells (APC) activate T-cell receptor (TCR), a serie of phosphorylations lead to the recruitment of ZAP70 to the doubly phosphorylated TCR component CD3Z through ITAM motif at the plasma membrane. This recruitment serves to localization to the stimulated TCR and to relieve its autoinhibited conformation. Release of ZAP70 active conformation is further stabilized by phosphorylation mediated by LCK. Subsequently, ZAP70 phosphorylates at least 2 essential adapter proteins: LAT and LCP2. In turn, a large number of signaling molecules are recruited and ultimately lead to lymphokine production, T-cell proliferation and differentiation. Furthermore, ZAP70 controls cytoskeleton modifications, adhesion and mobility of T-lymphocytes, thus ensuring correct delivery of effectors to the APC. ZAP70 is also required for TCR-CD3Z internalization and degradation through interaction with the E3 ubiquitin-protein ligase CBL and adapter proteins SLA and SLA2. Thus, ZAP70 regulates both T-cell activation switch on and switch off by modulating TCR expression at the T-cell surface. During thymocyte development, ZAP70 promotes survival and cell-cycle progression of developing thymocytes before positive selection (when cells are still CD4/CD8 double negative). Additionally, ZAP70-dependent signaling pathway may also contribute to primary B-cells formation and activation through B-cell receptor (BCR). This is Tyrosine-protein kinase ZAP-70 (Zap70) from Mus musculus (Mouse).